Here is a 280-residue protein sequence, read N- to C-terminus: Protoheme IX farnesyltransferase (280 aa).

Helical transmembrane passes span 2–21 (VVAT…RAGL), 30–50 (AAVP…VVSG), 83–103 (LALW…LVGV), 105–125 (ATTG…YTPL), 131–151 (LSLP…WTSV), 160–180 (FLLF…ISLF), 206–226 (IVGY…LGVA), 229–249 (VYLG…VYGL), and 260–280 (QVFF…MIGA).

It belongs to the UbiA prenyltransferase family. Protoheme IX farnesyltransferase subfamily.

It is found in the cell inner membrane. The catalysed reaction is heme b + (2E,6E)-farnesyl diphosphate + H2O = Fe(II)-heme o + diphosphate. Its pathway is porphyrin-containing compound metabolism; heme O biosynthesis; heme O from protoheme: step 1/1. Functionally, converts heme B (protoheme IX) to heme O by substitution of the vinyl group on carbon 2 of heme B porphyrin ring with a hydroxyethyl farnesyl side group. This is Protoheme IX farnesyltransferase from Sorangium cellulosum (strain So ce56) (Polyangium cellulosum (strain So ce56)).